The chain runs to 511 residues: GMP synthase [glutamine-hydrolyzing] (511 aa).

The 191-residue stretch at 5-195 folds into the Glutamine amidotransferase type-1 domain; that stretch reads MILVLDFGGQ…LYNICGCKGD (191 aa). Residue Cys82 is the Nucleophile of the active site. Catalysis depends on residues His169 and Glu171. The region spanning 196 to 386 is the GMPS ATP-PPase domain; the sequence is WKMSSFVENS…LGIPEDLVWR (191 aa). 223–229 provides a ligand contact to ATP; it reads SGGVDSS.

In terms of assembly, homodimer.

It catalyses the reaction XMP + L-glutamine + ATP + H2O = GMP + L-glutamate + AMP + diphosphate + 2 H(+). Its pathway is purine metabolism; GMP biosynthesis; GMP from XMP (L-Gln route): step 1/1. Its function is as follows. Catalyzes the synthesis of GMP from XMP. The sequence is that of GMP synthase [glutamine-hydrolyzing] from Ruminiclostridium cellulolyticum (strain ATCC 35319 / DSM 5812 / JCM 6584 / H10) (Clostridium cellulolyticum).